An 86-amino-acid chain; its full sequence is Maxadilan (86 aa).

Positions 1-23 (MKQILLISLVVVLAVFAFNVAEG) are cleaved as a signal peptide. Cystine bridges form between Cys24-Cys28 and Cys37-Cys74.

As to quaternary structure, interacts with human ADCYAP1R1. As to expression, salivary gland (at protein level).

It localises to the secreted. Potent vasodilator. Activates mammalian ADCYAP1R1, a PAC1 receptor, and induces cAMP accumulation in host cells. Causes the development of erythema following superficial injection into the rabbit or human skin. Influences adaptive immune responses mediated by host dendritic cells. Reduces surface expression of CD80 on host dendritic cells stimulated with lipopolysaccharides (LPS) and induces concomitant increase in CD86 expression on a subpopulation of these cells. Redirects cytokine secretion by LPS-activated host dendritic cells toward type 2 responses: decreases secretion of TNF-alpha/TNF, IL-12p40/IL12B and IFN-gamma/IFNG, and increases secretion of IL6 and IL10. Reduces ability of host bone marrow-derived dendritic cells to stimulate proliferation of CD4(+) T-cells. Reprograms the effect of LPS-activated host dendritic cells on cytokine secretion profiles in host T-cells: decreases secretion of TNF-alpha/TNF and IFN-gamma/IFNG, increases secretion of IL6 and IL13, and increases secretion of pro-inflammatory cytokine IL-1beta/IL1B in mixed lymphocyte reaction (MLR) cultures. Reduces LPS-induced up-regulation of CCR7 in activated host dendritic cells. Inhibits IFN-gamma/IFNG and IL-12p40/IL12B production by human peripheral blood mononuclear cells. Increases IL6 and decreases TNF-alpha/TNF production by LPS-stimulated human monocytes. In terms of biological role, (Microbial infection) Probably plays a critical role in the enhancement of Leishmania infectivity in the host attributed to sand fly saliva. This is Maxadilan from Lutzomyia longipalpis (Sand fly).